The sequence spans 311 residues: Manganese-dependent ADP-ribose/CDP-alcohol diphosphatase (311 aa).

Residues aspartate 17, glutamine 19, aspartate 64, asparagine 99, histidine 218, histidine 255, and histidine 257 each coordinate Zn(2+).

Belongs to the ADPRibase-Mn family. As to quaternary structure, monomer. Requires Mg(2+) as cofactor.

The enzyme catalyses CDP-choline + H2O = phosphocholine + CMP + 2 H(+). The catalysed reaction is ADP-D-ribose + H2O = D-ribose 5-phosphate + AMP + 2 H(+). It catalyses the reaction CDP-glycerol + H2O = sn-glycerol 3-phosphate + CMP + 2 H(+). Functionally, hydrolyzes ADP-ribose, IDP-ribose, CDP-glycerol, CDP-choline and CDP-ethanolamine, but not other non-reducing ADP-sugars or CDP-glucose. In Arabidopsis thaliana (Mouse-ear cress), this protein is Manganese-dependent ADP-ribose/CDP-alcohol diphosphatase.